A 312-amino-acid chain; its full sequence is uncharacterized protein (312 aa).

Disordered stretches follow at residues Met1–Ala26 and Gly45–Gly106. Residues Arg8 to Asn17 are compositionally biased toward basic residues. Basic and acidic residues predominate over residues Asn68–Arg77. The segment covering Gly85–Leu103 has biased composition (polar residues).

This is an uncharacterized protein from Schizosaccharomyces pombe (strain 972 / ATCC 24843) (Fission yeast).